The primary structure comprises 908 residues: Alanine--tRNA ligase (908 aa).

4 residues coordinate Zn(2+): H596, H600, C698, and H702.

Belongs to the class-II aminoacyl-tRNA synthetase family. Zn(2+) is required as a cofactor.

The protein localises to the cytoplasm. It carries out the reaction tRNA(Ala) + L-alanine + ATP = L-alanyl-tRNA(Ala) + AMP + diphosphate. In terms of biological role, catalyzes the attachment of alanine to tRNA(Ala) in a two-step reaction: alanine is first activated by ATP to form Ala-AMP and then transferred to the acceptor end of tRNA(Ala). Also edits incorrectly charged Ser-tRNA(Ala) and Gly-tRNA(Ala) via its editing domain. This chain is Alanine--tRNA ligase, found in Lysinibacillus sphaericus (strain C3-41).